An 89-amino-acid chain; its full sequence is Small ribosomal subunit protein uS15 (89 aa).

The protein belongs to the universal ribosomal protein uS15 family. Part of the 30S ribosomal subunit. Forms a bridge to the 50S subunit in the 70S ribosome, contacting the 23S rRNA.

One of the primary rRNA binding proteins, it binds directly to 16S rRNA where it helps nucleate assembly of the platform of the 30S subunit by binding and bridging several RNA helices of the 16S rRNA. Its function is as follows. Forms an intersubunit bridge (bridge B4) with the 23S rRNA of the 50S subunit in the ribosome. The chain is Small ribosomal subunit protein uS15 from Zymomonas mobilis subsp. mobilis (strain ATCC 31821 / ZM4 / CP4).